Reading from the N-terminus, the 391-residue chain is Formate-dependent phosphoribosylglycinamide formyltransferase (391 aa).

Residues 18–19 (EL) and Glu-78 contribute to the N(1)-(5-phospho-beta-D-ribosyl)glycinamide site. Residues Arg-110, Lys-151, 156 to 161 (SSGKGQ), 191 to 194 (EEFI), and Glu-199 each bind ATP. The region spanning 115–305 (DLAAQQLGLR…EFELHLRAVL (191 aa)) is the ATP-grasp domain. Mg(2+) contacts are provided by Glu-264 and Glu-276. N(1)-(5-phospho-beta-D-ribosyl)glycinamide contacts are provided by residues Asp-283, Lys-353, and 360-361 (RR).

The protein belongs to the PurK/PurT family. In terms of assembly, homodimer.

It carries out the reaction N(1)-(5-phospho-beta-D-ribosyl)glycinamide + formate + ATP = N(2)-formyl-N(1)-(5-phospho-beta-D-ribosyl)glycinamide + ADP + phosphate + H(+). It participates in purine metabolism; IMP biosynthesis via de novo pathway; N(2)-formyl-N(1)-(5-phospho-D-ribosyl)glycinamide from N(1)-(5-phospho-D-ribosyl)glycinamide (formate route): step 1/1. Involved in the de novo purine biosynthesis. Catalyzes the transfer of formate to 5-phospho-ribosyl-glycinamide (GAR), producing 5-phospho-ribosyl-N-formylglycinamide (FGAR). Formate is provided by PurU via hydrolysis of 10-formyl-tetrahydrofolate. This Synechococcus elongatus (strain ATCC 33912 / PCC 7942 / FACHB-805) (Anacystis nidulans R2) protein is Formate-dependent phosphoribosylglycinamide formyltransferase.